A 203-amino-acid chain; its full sequence is Putative GPI-anchored protein YHR214W (203 aa).

Residues 1–23 form the signal peptide; it reads MFNRFNKFQAAVALALLSRGALG. N-linked (GlcNAc...) asparagine glycosylation is found at asparagine 28 and asparagine 138. A lipid anchor (GPI-anchor amidated asparagine) is attached at asparagine 184. Positions 185–203 are cleaved as a propeptide — removed in mature form; sequence AGTFSLSNAILNGGSVSGL.

The protein resides in the cell membrane. This chain is Putative GPI-anchored protein YHR214W, found in Saccharomyces cerevisiae (strain ATCC 204508 / S288c) (Baker's yeast).